We begin with the raw amino-acid sequence, 168 residues long: Large ribosomal subunit protein uL10 (168 aa).

Belongs to the universal ribosomal protein uL10 family. As to quaternary structure, part of the ribosomal stalk of the 50S ribosomal subunit. The N-terminus interacts with L11 and the large rRNA to form the base of the stalk. The C-terminus forms an elongated spine to which L12 dimers bind in a sequential fashion forming a multimeric L10(L12)X complex.

Forms part of the ribosomal stalk, playing a central role in the interaction of the ribosome with GTP-bound translation factors. This chain is Large ribosomal subunit protein uL10, found in Levilactobacillus brevis (strain ATCC 367 / BCRC 12310 / CIP 105137 / JCM 1170 / LMG 11437 / NCIMB 947 / NCTC 947) (Lactobacillus brevis).